The chain runs to 204 residues: GTP cyclohydrolase 1 (204 aa).

Residues Cys92, His95, and Cys165 each coordinate Zn(2+).

Belongs to the GTP cyclohydrolase I family. In terms of assembly, homomer.

It catalyses the reaction GTP + H2O = 7,8-dihydroneopterin 3'-triphosphate + formate + H(+). It functions in the pathway cofactor biosynthesis; 7,8-dihydroneopterin triphosphate biosynthesis; 7,8-dihydroneopterin triphosphate from GTP: step 1/1. The polypeptide is GTP cyclohydrolase 1 (Mycolicibacterium paratuberculosis (strain ATCC BAA-968 / K-10) (Mycobacterium paratuberculosis)).